The chain runs to 243 residues: Ubiquinone/menaquinone biosynthesis C-methyltransferase UbiE (243 aa).

S-adenosyl-L-methionine-binding positions include threonine 69, aspartate 90, and 116-117 (DA).

Belongs to the class I-like SAM-binding methyltransferase superfamily. MenG/UbiE family.

The catalysed reaction is a 2-demethylmenaquinol + S-adenosyl-L-methionine = a menaquinol + S-adenosyl-L-homocysteine + H(+). It catalyses the reaction a 2-methoxy-6-(all-trans-polyprenyl)benzene-1,4-diol + S-adenosyl-L-methionine = a 5-methoxy-2-methyl-3-(all-trans-polyprenyl)benzene-1,4-diol + S-adenosyl-L-homocysteine + H(+). The protein operates within quinol/quinone metabolism; menaquinone biosynthesis; menaquinol from 1,4-dihydroxy-2-naphthoate: step 2/2. Its pathway is cofactor biosynthesis; ubiquinone biosynthesis. Its function is as follows. Methyltransferase required for the conversion of demethylmenaquinol (DMKH2) to menaquinol (MKH2) and the conversion of 2-polyprenyl-6-methoxy-1,4-benzoquinol (DDMQH2) to 2-polyprenyl-3-methyl-6-methoxy-1,4-benzoquinol (DMQH2). The chain is Ubiquinone/menaquinone biosynthesis C-methyltransferase UbiE from Burkholderia vietnamiensis (strain G4 / LMG 22486) (Burkholderia cepacia (strain R1808)).